The following is a 396-amino-acid chain: Elongation factor Tu (396 aa).

One can recognise a tr-type G domain in the interval 10–205 (KSHANIGTIG…AVDEYIPTPE (196 aa)). The tract at residues 19–26 (GHVDHGKT) is G1. 19-26 (GHVDHGKT) serves as a coordination point for GTP. Residue threonine 26 participates in Mg(2+) binding. A G2 region spans residues 61–65 (GITIS). A G3 region spans residues 82–85 (DCPG). Residues 82–86 (DCPGH) and 137–140 (NKCD) each bind GTP. Residues 137–140 (NKCD) are G4. The interval 175–177 (SAL) is G5. Phosphothreonine is present on threonine 385.

Belongs to the TRAFAC class translation factor GTPase superfamily. Classic translation factor GTPase family. EF-Tu/EF-1A subfamily. Monomer. Interacts with BrxC. In terms of processing, phosphorylated on Thr-385 in vitro by PrkC in the presence of poly-L-lysine or myelin basic protein, dephosphorylated by PrpC.

It localises to the cytoplasm. It carries out the reaction GTP + H2O = GDP + phosphate + H(+). Functionally, GTP hydrolase that promotes the GTP-dependent binding of aminoacyl-tRNA to the A-site of ribosomes during protein biosynthesis. The protein is Elongation factor Tu of Bacillus subtilis (strain 168).